We begin with the raw amino-acid sequence, 348 residues long: Zinc finger protein 843 (348 aa).

A C2H2-type 1 zinc finger spans residues 33–55; that stretch reads CKCKACGRGFTQSASLLQHWRVH. The C2H2-type 2; degenerate zinc finger occupies 145–167; that stretch reads FCCCSCGDSVNEKTSLSQRVLPH. Residues 184–195 show a composition bias toward polar residues; it reads APSSVAPDSTSG. Disordered stretches follow at residues 184–203 and 256–329; these read APSS…GSPG and ATQP…WRGA.

The sequence is that of Zinc finger protein 843 (ZNF843) from Homo sapiens (Human).